Consider the following 178-residue polypeptide: Large ribosomal subunit protein uL5 (178 aa).

N-acetylalanine is present on Ala-2. Residue Lys-38 forms a Glycyl lysine isopeptide (Lys-Gly) (interchain with G-Cter in SUMO2) linkage. 2 positions are modified to phosphothreonine: Thr-44 and Thr-47. Lys-52 carries the N6-acetyllysine; alternate modification. Lys-52 is covalently cross-linked (Glycyl lysine isopeptide (Lys-Gly) (interchain with G-Cter in SUMO2); alternate). At Lys-85 the chain carries N6-acetyllysine. Lys-154 participates in a covalent cross-link: Glycyl lysine isopeptide (Lys-Gly) (interchain with G-Cter in SUMO2).

The protein belongs to the universal ribosomal protein uL5 family. In terms of assembly, component of the large ribosomal subunit (LSU). Part of the 5S RNP complex, which is a LSU subcomplex composed of the 5S RNA, RPL5 and RPL11. Component of a hexameric 5S RNP precursor complex, composed of 5S RNA, RRS1, RPF2/BXDC1, RPL5, RPL11 and HEATR3; this complex acts as a precursor for ribosome assembly. Interacts with PML. Interacts with MDM2 (via its RanBP2-type zinc finger domain); negatively regulates MDM2-mediated TP53 ubiquitination and degradation. Interacts with NOP53; retains RPL11 into the nucleolus.

The protein localises to the nucleus. It localises to the nucleolus. Its subcellular location is the cytoplasm. Functionally, component of the ribosome, a large ribonucleoprotein complex responsible for the synthesis of proteins in the cell. The small ribosomal subunit (SSU) binds messenger RNAs (mRNAs) and translates the encoded message by selecting cognate aminoacyl-transfer RNA (tRNA) molecules. The large subunit (LSU) contains the ribosomal catalytic site termed the peptidyl transferase center (PTC), which catalyzes the formation of peptide bonds, thereby polymerizing the amino acids delivered by tRNAs into a polypeptide chain. The nascent polypeptides leave the ribosome through a tunnel in the LSU and interact with protein factors that function in enzymatic processing, targeting, and the membrane insertion of nascent chains at the exit of the ribosomal tunnel. As part of the 5S RNP/5S ribonucleoprotein particle it is an essential component of the LSU, required for its formation and the maturation of rRNAs. It also couples ribosome biogenesis to p53/TP53 activation. As part of the 5S RNP it accumulates in the nucleoplasm and inhibits MDM2, when ribosome biogenesis is perturbed, mediating the stabilization and the activation of TP53. Promotes nucleolar location of PML. The sequence is that of Large ribosomal subunit protein uL5 (RPL11) from Pongo abelii (Sumatran orangutan).